A 209-amino-acid chain; its full sequence is Small ribosomal subunit protein eS1 (209 aa).

It belongs to the eukaryotic ribosomal protein eS1 family.

The polypeptide is Small ribosomal subunit protein eS1 (Picrophilus torridus (strain ATCC 700027 / DSM 9790 / JCM 10055 / NBRC 100828 / KAW 2/3)).